The following is a 421-amino-acid chain: Serine hydroxymethyltransferase (421 aa).

Residues L118 and 122–124 contribute to the (6S)-5,6,7,8-tetrahydrofolate site; that span reads GHL. Residue K226 is modified to N6-(pyridoxal phosphate)lysine.

This sequence belongs to the SHMT family. Homodimer. Pyridoxal 5'-phosphate serves as cofactor.

It localises to the cytoplasm. The catalysed reaction is (6R)-5,10-methylene-5,6,7,8-tetrahydrofolate + glycine + H2O = (6S)-5,6,7,8-tetrahydrofolate + L-serine. It functions in the pathway one-carbon metabolism; tetrahydrofolate interconversion. Its pathway is amino-acid biosynthesis; glycine biosynthesis; glycine from L-serine: step 1/1. Catalyzes the reversible interconversion of serine and glycine with tetrahydrofolate (THF) serving as the one-carbon carrier. This reaction serves as the major source of one-carbon groups required for the biosynthesis of purines, thymidylate, methionine, and other important biomolecules. Also exhibits THF-independent aldolase activity toward beta-hydroxyamino acids, producing glycine and aldehydes, via a retro-aldol mechanism. This Mycoplasmopsis agalactiae (strain NCTC 10123 / CIP 59.7 / PG2) (Mycoplasma agalactiae) protein is Serine hydroxymethyltransferase.